The primary structure comprises 265 residues: Lysosomal membrane ascorbate-dependent ferrireductase CYB561A3 (265 aa).

The Cytoplasmic portion of the chain corresponds to 1 to 2 (MA). The helical transmembrane segment at 3–23 (VGWFYLSVLALCSLGSMCILF) threads the bilayer. A Cytochrome b561 domain is found at 12 to 219 (ALCSLGSMCI…FGLLVLYILL (208 aa)). Residues 24 to 45 (TIYWMRYWHGGFAWDGSMLMFN) lie on the Lumenal side of the membrane. Residues 46-66 (WHPVLMVTGMVVLYSAASLVY) form a helical membrane-spanning segment. Heme b-binding residues include His47 and Arg67. The Cytoplasmic portion of the chain corresponds to 67–83 (RLPQSWVGPRLPWKSGH). Arg76 and Lys80 together coordinate L-ascorbate. His83 is a binding site for heme b. The chain crosses the membrane as a helical span at residues 84-104 (AAMHLLAFLLTVLGLHAVFEF). Residues 105-119 (HNHAKIPHLYSLHSW) lie on the Lumenal side of the membrane. Heme b contacts are provided by residues 112–115 (HLYS) and His117. A helical membrane pass occupies residues 120 to 140 (LGITTVFLFACQWFLGFSVFL). At 141 to 154 (LPWASMWLRSLLKP) the chain is on the cytoplasmic side. Arg149 contacts L-ascorbate. A helical membrane pass occupies residues 155–175 (IHVFFGASILSLAIASVVSGI). Heme b contacts are provided by His156 and Glu177. Residues 176-197 (NEKLFFSLKNGTKTYSNLPSEA) are Lumenal-facing. Asn185 carries an N-linked (GlcNAc...) asparagine glycan. Residues 198–218 (VFANCAGMLVVVFGLLVLYIL) form a helical membrane-spanning segment. Residues 219-265 (LASSWKRPEPGMQAEREPTRTRGRAGTPEVMLEGERGLAEPLLQKRS) are Cytoplasmic-facing. Position 224 (Lys224) interacts with heme b. Residues 228–238 (PGMQAEREPTR) show a composition bias toward basic and acidic residues. Residues 228-265 (PGMQAEREPTRTRGRAGTPEVMLEGERGLAEPLLQKRS) are disordered.

Homodimer. Heme b is required as a cofactor. In terms of processing, N-glycosylated.

The protein resides in the late endosome membrane. It localises to the lysosome membrane. It carries out the reaction Fe(3+)(out) + L-ascorbate(in) = monodehydro-L-ascorbate radical(in) + Fe(2+)(out) + H(+). In terms of biological role, transmembrane reductase that uses ascorbate as an electron donor in the cytoplasm and transfers electrons across membranes to reduce iron cations Fe(3+) into Fe(2+) in the lumen of the late endosome and lysosome. Reduced iron can then be extruded from the late endosome and lysosome to the cytoplasm by divalent metal-specific transporters. It is therefore most probably involved in endosomal and lysosomal cellular iron homeostasis. In Bos taurus (Bovine), this protein is Lysosomal membrane ascorbate-dependent ferrireductase CYB561A3.